The following is an 871-amino-acid chain: Speckle targeted PIP5K1A-regulated poly(A) polymerase (871 aa).

The Matrin-type zinc finger occupies 16 to 46 (FRCCLCHITTANQPSLDAHLGGRKHRHLVEL). Residues 56–128 (RSVFVSGFPR…RRLRVRPREQ (73 aa)) form the RRM domain. Serine 205 serves as a coordination point for ATP. The Mg(2+) site is built by aspartate 216 and aspartate 218. Aspartate 216 and aspartate 218 together coordinate UTP. The segment at 252–321 (QALACTPASP…QEDQGDGDQG (70 aa)) is disordered. The span at 259–269 (ASPPDSQPPAS) shows a compositional bias: pro residues. Asparagine 392 contacts ATP. The UTP site is built by asparagine 392, arginine 414, tyrosine 432, and histidine 547. The region spanning 489-547 (LSSLLAQFFSCVSCWDLRGSLLSLREGQALSVAGGLPSNLSEGLRLGPMNLQDPFDLSH) is the PAP-associated domain. Residues 596–871 (SSPSSILSAT…LPQALRNLLK (276 aa)) are KA1; binds the bulging loops of U6 snRNA but is dispensable for terminal uridylyltransferase activity. The segment at 636 to 684 (GTKRLRSEGGGPGEPPQGGTSKRAKLDGQKKSCEEGPEEQQGCAGEHGE) is disordered. Residues 659–669 (AKLDGQKKSCE) are compositionally biased toward basic and acidic residues. Serine 748 carries the post-translational modification Phosphoserine.

This sequence belongs to the DNA polymerase type-B-like family. Associates with the cleavage and polyadenylation specificity factor (CPSF) complex. Interacts with CPSF1 and CPSF3; the interaction is direct. Interacts with PIP5K1A. It depends on Mg(2+) as a cofactor. Mn(2+) serves as cofactor. Phosphorylated by CK1 in the proline-rich (Pro-rich) region.

It localises to the nucleus. The protein resides in the nucleolus. Its subcellular location is the nucleus speckle. The catalysed reaction is RNA(n) + UTP = RNA(n)-3'-uridine ribonucleotide + diphosphate. It catalyses the reaction RNA(n) + ATP = RNA(n)-3'-adenine ribonucleotide + diphosphate. With respect to regulation, adenylyltransferase activity is specifically phosphatidylinositol 4,5-bisphosphate (PtdIns(4,5)P2). Its function is as follows. Poly(A) polymerase that creates the 3'-poly(A) tail of specific pre-mRNAs. Localizes to nuclear speckles together with PIP5K1A and mediates polyadenylation of a select set of mRNAs, such as HMOX1. In addition to polyadenylation, it is also required for the 3'-end cleavage of pre-mRNAs: binds to the 3'UTR of targeted pre-mRNAs and promotes the recruitment and assembly of the CPSF complex on the 3'UTR of pre-mRNAs. In addition to adenylyltransferase activity, also has uridylyltransferase activity. However, the ATP ratio is higher than UTP in cells, suggesting that it functions primarily as a poly(A) polymerase. Acts as a specific terminal uridylyltransferase for U6 snRNA in vitro: responsible for a controlled elongation reaction that results in the restoration of the four 3'-terminal UMP-residues found in newly transcribed U6 snRNA. Not involved in replication-dependent histone mRNA degradation. The sequence is that of Speckle targeted PIP5K1A-regulated poly(A) polymerase (TUT1) from Bos taurus (Bovine).